The primary structure comprises 507 residues: Histidine ammonia-lyase (507 aa).

Residues 141 to 143 (ASG) constitute a cross-link (5-imidazolinone (Ala-Gly)). Ser142 bears the 2,3-didehydroalanine (Ser) mark.

It belongs to the PAL/histidase family. Contains an active site 4-methylidene-imidazol-5-one (MIO), which is formed autocatalytically by cyclization and dehydration of residues Ala-Ser-Gly.

The protein localises to the cytoplasm. The enzyme catalyses L-histidine = trans-urocanate + NH4(+). Its pathway is amino-acid degradation; L-histidine degradation into L-glutamate; N-formimidoyl-L-glutamate from L-histidine: step 1/3. The chain is Histidine ammonia-lyase from Burkholderia pseudomallei (strain 1106a).